Consider the following 276-residue polypeptide: Ribosomal RNA small subunit methyltransferase A (276 aa).

S-adenosyl-L-methionine is bound by residues N16, L18, G43, E64, D89, and N109.

The protein belongs to the class I-like SAM-binding methyltransferase superfamily. rRNA adenine N(6)-methyltransferase family. RsmA subfamily.

The protein resides in the cytoplasm. The enzyme catalyses adenosine(1518)/adenosine(1519) in 16S rRNA + 4 S-adenosyl-L-methionine = N(6)-dimethyladenosine(1518)/N(6)-dimethyladenosine(1519) in 16S rRNA + 4 S-adenosyl-L-homocysteine + 4 H(+). Specifically dimethylates two adjacent adenosines (A1518 and A1519) in the loop of a conserved hairpin near the 3'-end of 16S rRNA in the 30S particle. May play a critical role in biogenesis of 30S subunits. In Marinobacter nauticus (strain ATCC 700491 / DSM 11845 / VT8) (Marinobacter aquaeolei), this protein is Ribosomal RNA small subunit methyltransferase A.